A 90-amino-acid chain; its full sequence is Probable Fe(2+)-trafficking protein (90 aa).

The protein belongs to the Fe(2+)-trafficking protein family.

In terms of biological role, could be a mediator in iron transactions between iron acquisition and iron-requiring processes, such as synthesis and/or repair of Fe-S clusters in biosynthetic enzymes. In Pasteurella multocida (strain Pm70), this protein is Probable Fe(2+)-trafficking protein.